Here is a 509-residue protein sequence, read N- to C-terminus: Cytochrome P450 monooxygenase alt3 (509 aa).

The helical transmembrane segment at 25–45 threads the bilayer; sequence IITGIIVLPVLYVLLKVIYNL. Cys-450 lines the heme pocket.

Belongs to the cytochrome P450 family. Heme is required as a cofactor.

Its subcellular location is the membrane. It functions in the pathway secondary metabolite biosynthesis. In terms of biological role, cytochrome P450 monooxygenase; part of the gene cluster that mediates the biosynthesis of alternapyrone derivatives. Alternapyrone is a decaketide with octa-methylation from methionine on every C2 unit except the third unit. All the domains in the polyketide synthase alt5 are apparently involved in alternapyrone synthesis, that is, the 8 CMeT, 7 KR, 7 DH, and 4 ER reactions in the 9 KS-mediated condensation steps required for alternapyrone synthesis. the alternapyrone produced by alt5 might be intensively modified by cytochrome P450 monooxygenases alt1, alt2 and alt3 and FAD-dependent oxidoreductase alt4 present in the alt gene cluster. This is Cytochrome P450 monooxygenase alt3 from Alternaria solani.